Here is a 150-residue protein sequence, read N- to C-terminus: Protein-export protein SecB (150 aa).

This sequence belongs to the SecB family. In terms of assembly, homotetramer, a dimer of dimers. One homotetramer interacts with 1 SecA dimer.

Its subcellular location is the cytoplasm. Functionally, one of the proteins required for the normal export of preproteins out of the cell cytoplasm. It is a molecular chaperone that binds to a subset of precursor proteins, maintaining them in a translocation-competent state. It also specifically binds to its receptor SecA. This chain is Protein-export protein SecB, found in Polaromonas sp. (strain JS666 / ATCC BAA-500).